Consider the following 96-residue polypeptide: Co-chaperonin GroES (96 aa).

This sequence belongs to the GroES chaperonin family. As to quaternary structure, heptamer of 7 subunits arranged in a ring. Interacts with the chaperonin GroEL.

It localises to the cytoplasm. In terms of biological role, together with the chaperonin GroEL, plays an essential role in assisting protein folding. The GroEL-GroES system forms a nano-cage that allows encapsulation of the non-native substrate proteins and provides a physical environment optimized to promote and accelerate protein folding. GroES binds to the apical surface of the GroEL ring, thereby capping the opening of the GroEL channel. The sequence is that of Co-chaperonin GroES from Nitrosomonas eutropha (strain DSM 101675 / C91 / Nm57).